The primary structure comprises 651 residues: Mitogen-activated protein kinase kinase kinase 3 (651 aa).

Residues 68-330 (WRKGELIGCG…ATELLQHPFV (263 aa)) form the Protein kinase domain. Residues 74-82 (IGCGAFGRV) and Lys97 each bind ATP. Residues 105–130 (SASKEKTQGHIRELEEEVQLLKNLSH) are a coiled coil. Glycyl lysine isopeptide (Lys-Gly) (interchain with G-Cter in ubiquitin) cross-links involve residues Lys108 and Lys110. Asp196 functions as the Proton acceptor in the catalytic mechanism. The disordered stretch occupies residues 573-608 (MPSPLKSSKRTLNTSRVMQSGTEPTQVNESTKKGVN). The span at 582 to 608 (RTLNTSRVMQSGTEPTQVNESTKKGVN) shows a compositional bias: polar residues. Residues 618–641 (RKWEEELYEELERHRENLRHAGAG) adopt a coiled-coil conformation.

It belongs to the protein kinase superfamily. STE Ser/Thr protein kinase family. MAP kinase kinase kinase subfamily. In terms of assembly, interacts with NACK2 and MKK6. In terms of tissue distribution, expressed in roots and flowers.

Its subcellular location is the cytoplasm. It localises to the cytoskeleton. The catalysed reaction is L-seryl-[protein] + ATP = O-phospho-L-seryl-[protein] + ADP + H(+). It catalyses the reaction L-threonyl-[protein] + ATP = O-phospho-L-threonyl-[protein] + ADP + H(+). Functionally, involved in cortical microtubules organization and stabilization by regulating the phosphorylation state of microtubule-associated proteins such as MAP65-1. The chain is Mitogen-activated protein kinase kinase kinase 3 (ANP3) from Arabidopsis thaliana (Mouse-ear cress).